The primary structure comprises 455 residues: Anthocyanidin 3-O-glucosyltransferase (455 aa).

Catalysis depends on H18, which acts as the Proton acceptor. An anthocyanidin is bound at residue H18. D118 (charge relay) is an active-site residue. T139 contacts UDP-alpha-D-glucose. H148 is an an anthocyanidin binding site. Positions 336, 338, 353, 356, 358, and 361 each coordinate UDP-alpha-D-glucose. G376 contributes to the an anthocyanidin binding site. D377 and Q378 together coordinate UDP-alpha-D-glucose.

Belongs to the UDP-glycosyltransferase family.

It carries out the reaction an anthocyanidin + UDP-alpha-D-glucose + H(+) = an anthocyanidin 3-O-beta-D-glucoside + UDP. The protein operates within pigment biosynthesis; anthocyanin biosynthesis. In terms of biological role, in the presence of other necessary color factors, this glycosylation reaction allows the accumulation of anthocyanin pigments. The sequence is that of Anthocyanidin 3-O-glucosyltransferase (BZ1) from Hordeum vulgare (Barley).